The sequence spans 196 residues: ATP-dependent Clp protease proteolytic subunit (196 aa).

Ser101 functions as the Nucleophile in the catalytic mechanism. His126 is an active-site residue.

It belongs to the peptidase S14 family. Component of the chloroplastic Clp protease core complex.

The protein localises to the plastid. Its subcellular location is the chloroplast stroma. It carries out the reaction Hydrolysis of proteins to small peptides in the presence of ATP and magnesium. alpha-casein is the usual test substrate. In the absence of ATP, only oligopeptides shorter than five residues are hydrolyzed (such as succinyl-Leu-Tyr-|-NHMec, and Leu-Tyr-Leu-|-Tyr-Trp, in which cleavage of the -Tyr-|-Leu- and -Tyr-|-Trp bonds also occurs).. Its function is as follows. Cleaves peptides in various proteins in a process that requires ATP hydrolysis. Has a chymotrypsin-like activity. Plays a major role in the degradation of misfolded proteins. The polypeptide is ATP-dependent Clp protease proteolytic subunit (Lobularia maritima (Sweet alyssum)).